Reading from the N-terminus, the 134-residue chain is Early E3B 14.5 kDa protein (134 aa).

An N-terminal signal peptide occupies residues 1 to 21; sequence MQAMLPVILILLLPCIPLAST. Residues 54-78 form a helical membrane-spanning segment; sequence YWIVIVGIINILSCTFFSITIYPTF.

It belongs to the adenoviridae E3_14 family. Post-translationally, phosphorylated on serine; O-glycosylated, but not N-glycosylated.

It localises to the host membrane. Its function is as follows. Down-regulates the EGF receptor and prevents cytolysis by TNF. This chain is Early E3B 14.5 kDa protein, found in Homo sapiens (Human).